A 658-amino-acid chain; its full sequence is Glycogen debranching enzyme (658 aa).

Catalysis depends on D336, which acts as the Nucleophile. E371 serves as the catalytic Proton donor. A disordered region spans residues 459–486; that stretch reads EANGEENRDGTNSNYSDNNGKEGLGGPL.

Belongs to the glycosyl hydrolase 13 family.

It carries out the reaction Hydrolysis of (1-&gt;6)-alpha-D-glucosidic linkages to branches with degrees of polymerization of three or four glucose residues in limit dextrin.. The protein operates within glycan degradation; glycogen degradation. Removes maltotriose and maltotetraose chains that are attached by 1,6-alpha-linkage to the limit dextrin main chain, generating a debranched limit dextrin. The chain is Glycogen debranching enzyme from Salmonella gallinarum (strain 287/91 / NCTC 13346).